A 419-amino-acid polypeptide reads, in one-letter code: UDP-N-acetylglucosamine 1-carboxyvinyltransferase 2 (419 aa).

Lys24–Asn25 is a phosphoenolpyruvate binding site. Residue Arg94 participates in UDP-N-acetyl-alpha-D-glucosamine binding. The active-site Proton donor is Cys118. A 2-(S-cysteinyl)pyruvic acid O-phosphothioketal modification is found at Cys118. UDP-N-acetyl-alpha-D-glucosamine is bound by residues Arg123 to Gln127, Asp307, and Ile329.

Belongs to the EPSP synthase family. MurA subfamily.

It localises to the cytoplasm. The catalysed reaction is phosphoenolpyruvate + UDP-N-acetyl-alpha-D-glucosamine = UDP-N-acetyl-3-O-(1-carboxyvinyl)-alpha-D-glucosamine + phosphate. Its pathway is cell wall biogenesis; peptidoglycan biosynthesis. Functionally, cell wall formation. Adds enolpyruvyl to UDP-N-acetylglucosamine. The polypeptide is UDP-N-acetylglucosamine 1-carboxyvinyltransferase 2 (Staphylococcus aureus (strain MRSA252)).